Consider the following 632-residue polypeptide: Probable potassium transport system protein Kup 1 (632 aa).

Transmembrane regions (helical) follow at residues 17–37 (LFYLALGSVGVVYGDIGTSPL), 60–80 (LISLMIWALTIIVTIKYVLFL), 106–126 (TAILMLLGLMGAALFLGDAMI), 146–166 (LADYIVPISVVILALLFVVQS), 175–195 (FFGPITAVWFLVMAAAGISHI), 210–230 (AVAFLLHEGFYGIVVLGAVFL), 254–274 (WFLLVFPALTLNYLGQGALVL), 292–312 (ALLPVVILATAATIIASQAVI), 344–364 (IFVPSVNAVLFIGVIFLVLGF), 370–390 (LATAYGISVTGAMVVTSIMAF), 401–421 (LPVAVIALAPLVVLEMIFLGA), and 426–446 (IHDGGYIPIMIATAFTVVMWT).

This sequence belongs to the HAK/KUP transporter (TC 2.A.72) family.

It is found in the cell inner membrane. It carries out the reaction K(+)(in) + H(+)(in) = K(+)(out) + H(+)(out). Transport of potassium into the cell. Likely operates as a K(+):H(+) symporter. The polypeptide is Probable potassium transport system protein Kup 1 (Rhizobium johnstonii (strain DSM 114642 / LMG 32736 / 3841) (Rhizobium leguminosarum bv. viciae)).